A 578-amino-acid polypeptide reads, in one-letter code: SWR1 complex bromodomain subunit bdf1 (578 aa).

Residues 1–18 (MSSESRENEVKAETKDEI) are compositionally biased toward basic and acidic residues. Disordered stretches follow at residues 1–89 (MSSE…PPPQ), 192–254 (DAEQ…RKNN), and 504–578 (ADSS…SESA). Positions 22-36 (GSPQLNGDNNIQSSD) are enriched in polar residues. 2 stretches are compositionally biased toward basic and acidic residues: residues 37 to 52 (GHND…KRDS) and 60 to 77 (LKQE…EPTV). Positions 84–190 (GMPPPQQKYC…EVFERQLKQL (107 aa)) constitute a Bromo 1 domain. The span at 219 to 242 (NSSVSSTSASVAASTAPKAASPAV) shows a compositional bias: low complexity. A phosphoserine mark is found at Ser221, Ser223, and Ser224. The residue at position 225 (Thr225) is a Phosphothreonine. 2 positions are modified to phosphoserine: Ser226 and Ser239. In terms of domain architecture, Bromo 2 spans 251-360 (RKNNSQMRFC…NVFKEKWEAR (110 aa)). The 81-residue stretch at 430-510 (RRDLTKEYGP…KPDADSSEPA (81 aa)) folds into the NET domain. The residue at position 511 (Ser511) is a Phosphoserine. Basic and acidic residues predominate over residues 526 to 537 (VLSETEQAEKIR). Over residues 550–563 (TSPTSPESNNAANV) the composition is skewed to polar residues. The segment covering 566–578 (SESDNESESSESA) has biased composition (acidic residues).

The protein belongs to the BET family. In terms of assembly, component of the SWR1 chromatin-remodeling complex.

The protein resides in the nucleus. In terms of biological role, component of the SWR1 complex which mediates the ATP-dependent exchange of histone H2A for the H2A variant HZT1 leading to transcriptional regulation of selected genes by chromatin remodeling. The chain is SWR1 complex bromodomain subunit bdf1 (bdf1) from Schizosaccharomyces pombe (strain 972 / ATCC 24843) (Fission yeast).